The chain runs to 384 residues: MAP kinase-activated protein kinase 3 (384 aa).

At Met1 the chain carries N-acetylmethionine. A disordered region spans residues 1 to 33; it reads MDGETAGEKGSLVPPPGALGGSALGGAPAPGVR. The Protein kinase domain maps to 46-306; that stretch reads QLSKQVLGLG…IMQFMNHPWI (261 aa). Residues 52 to 60 and Lys75 each bind ATP; that span reads LGLGVNGKV. The active-site Proton acceptor is Asp168. At Thr203 the chain carries Phosphothreonine; by MAPK14. Ser253 is subject to Phosphoserine; by MAPK14. A Phosphoserine; by autocatalysis modification is found at Ser309. Residues 309-345 form an autoinhibitory helix region; sequence SMVVPQTPLYTARVLQEDKDHWDDVKEEMTSALATMR. Position 315 is a phosphothreonine; by MAPK14 (Thr315). A Nuclear export signal (NES) motif is present at residues 337 to 346; sequence MTSALATMRV. The tract at residues 347 to 371 is p38 MAPK-binding site; that stretch reads DYDQVKIKDLKTSNNRLLNKRRKKQ. Short sequence motifs (bipartite nuclear localization signal) lie at residues 352–355 and 366–370; these read KIKD and KRRKK. The disordered stretch occupies residues 359–384; the sequence is SNNRLLNKRRKKQAGSSSASQGCNNQ. The span at 372–384 shows a compositional bias: polar residues; the sequence is AGSSSASQGCNNQ.

This sequence belongs to the protein kinase superfamily. CAMK Ser/Thr protein kinase family. As to quaternary structure, heterodimer with p38-alpha/MAPK14. The heterodimer with p38-alpha/MAPK14 forms a stable complex: molecules are positioned 'face to face' so that the ATP-binding sites of both kinases are at the heterodimer interface. Interacts with TCF3 and with polycomb proteins, such as PCH2 and BMI1/PCGF4. In terms of processing, phosphorylated and activated by MAPK1/ERK2 and MAPK3/ERK1. Phosphorylated and activated by MAP kinase p38-alpha/MAPK14 at Thr-201, Ser-251 and Thr-313. Isoform 3 is degraded following phosphorylation at Thr-203. In terms of tissue distribution, ubiquitously expressed (at protein level). Isoform 3 is expressed in skeletal muscles and heart.

The protein resides in the nucleus. The protein localises to the cytoplasm. The enzyme catalyses L-seryl-[protein] + ATP = O-phospho-L-seryl-[protein] + ADP + H(+). The catalysed reaction is L-threonyl-[protein] + ATP = O-phospho-L-threonyl-[protein] + ADP + H(+). Activated following phosphorylation by p38-alpha/MAPK14 following various stresses. Inhibited by ligand 5B (2'-[2-(1,3-benzodioxol-5-yl)pyrimidin-4-yl]-5',6'-dihydrospiro[piperidine-4,7'-pyrrolo[3,2-c]pyridin]- 4'(1'h)-one) and ligand P4O (2-[2-(2-fluorophenyl)pyridin-4-yl]-1,5,6,7-tetrahydro- 4h-pyrrolo[3,2-c]pyridin-4-one), 2 ATP-competitive inhibitors. Stress-activated serine/threonine-protein kinase involved in cytokines production, endocytosis, cell migration, chromatin remodeling and transcriptional regulation. Following stress, it is phosphorylated and activated by MAP kinase p38-alpha/MAPK14, leading to phosphorylation of substrates. Phosphorylates serine in the peptide sequence, Hyd-X-R-X(2)-S, where Hyd is a large hydrophobic residue. MAPKAPK2 and MAPKAPK3, share the same function and substrate specificity, but MAPKAPK3 kinase activity and level in protein expression are lower compared to MAPKAPK2. Phosphorylates HSP27/HSPB1, KRT18, KRT20, RCSD1, RPS6KA3, TAB3 and TTP/ZFP36. Mediates phosphorylation of HSP27/HSPB1 in response to stress, leading to dissociate HSP27/HSPB1 from large small heat-shock protein (sHsps) oligomers and impair their chaperone activities and ability to protect against oxidative stress effectively. Involved in inflammatory response by regulating tumor necrosis factor (TNF) and IL6 production post-transcriptionally: acts by phosphorylating AU-rich elements (AREs)-binding proteins, such as TTP/ZFP36, leading to regulate the stability and translation of TNF and IL6 mRNAs. Phosphorylation of TTP/ZFP36, a major post-transcriptional regulator of TNF, promotes its binding to 14-3-3 proteins and reduces its ARE mRNA affinity leading to inhibition of dependent degradation of ARE-containing transcript. Involved in toll-like receptor signaling pathway (TLR) in dendritic cells: required for acute TLR-induced macropinocytosis by phosphorylating and activating RPS6KA3. Also acts as a modulator of Polycomb-mediated repression. In Mus musculus (Mouse), this protein is MAP kinase-activated protein kinase 3 (Mapkapk3).